The sequence spans 508 residues: Photosystem II CP47 reaction center protein (508 aa).

The next 6 membrane-spanning stretches (helical) occupy residues 21 to 36 (SVHIMHTALVAGWAGS), 101 to 115 (IVFSGLCFLAAIWHW), 140 to 156 (GIHLFLAGVACFGFGAF), 203 to 218 (IAAGTLGILAGLFHLS), 237 to 252 (VLSSSIAAVFFAAFVV), and 457 to 472 (SFALLFFFGHIWHGAR).

Belongs to the PsbB/PsbC family. PsbB subfamily. In terms of assembly, PSII is composed of 1 copy each of membrane proteins PsbA, PsbB, PsbC, PsbD, PsbE, PsbF, PsbH, PsbI, PsbJ, PsbK, PsbL, PsbM, PsbT, PsbX, PsbY, PsbZ, Psb30/Ycf12, at least 3 peripheral proteins of the oxygen-evolving complex and a large number of cofactors. It forms dimeric complexes. Requires Binds multiple chlorophylls. PSII binds additional chlorophylls, carotenoids and specific lipids. as cofactor.

It is found in the plastid. The protein localises to the chloroplast thylakoid membrane. Its function is as follows. One of the components of the core complex of photosystem II (PSII). It binds chlorophyll and helps catalyze the primary light-induced photochemical processes of PSII. PSII is a light-driven water:plastoquinone oxidoreductase, using light energy to abstract electrons from H(2)O, generating O(2) and a proton gradient subsequently used for ATP formation. This Lactuca sativa (Garden lettuce) protein is Photosystem II CP47 reaction center protein.